Here is a 207-residue protein sequence, read N- to C-terminus: Protein lin-7 homolog B (207 aa).

The Kinase interacting site motif lies at 1-13 (MAALVEPLGLERD). The L27 domain maps to 10–65 (LERDVSRAVELLERLQRSGELPPQKLQALQRVLQSRFCSAIREVYEQLYDTLDITG). The PDZ domain maps to 93-175 (VVELPKTDEG…SVKLVVRYTP (83 aa)). The interval 187–207 (KMRSARRRQQHQSYSSLESRG) is disordered. Over residues 197–207 (HQSYSSLESRG) the composition is skewed to polar residues.

It belongs to the lin-7 family. As to quaternary structure, forms a complex with CASK and CASKIN1. Component of the brain-specific heterotrimeric complex (LIN-10-LIN-2-LIN-7 complex) composed of at least APBA1, CASK, and LIN7, which associates with the motor protein KIF17 to transport vesicles along microtubules. Forms a heterotrimeric complex composed of MMP5, LIN7B and PATJ; the N-terminal L27 domain of PALS1 interacts with the L27 domain of PATJ and the C-terminal L27 domain of PALS1 interacts with the L27 domain of LIN7B. Forms a heterotrimeric complex with DLG1 and CASK via their L27 domains. Interacts with DLG4 and GRIN2B as well as CDH1 and CTNNB1, the channels KCNJ12/Kir2.2, KCNJ4/Kir2.3 and probably KCNJ2/Kir2.1 and SLC6A12/BGT-1 via its PDZ domain. The association of LIN7A with cadherin and beta-catenin is calcium-dependent, occurs at synaptic junctions and requires the actin cytoskeleton. Interacts with EGFR, ERBB2, ERBB3 and ERBB4 with both PDZ and KID domains. Associates with KIF17 via APBA1. Interacts with ASIC3. Interacts with TOPK. Interacts with RTKN. Interacts with APBA1. Interacts with MPP7. Interacts with DLG2. Interacts with DLG3.

It localises to the cell membrane. The protein localises to the basolateral cell membrane. The protein resides in the cell junction. It is found in the postsynaptic density membrane. Its subcellular location is the tight junction. Plays a role in establishing and maintaining the asymmetric distribution of channels and receptors at the plasma membrane of polarized cells. Forms membrane-associated multiprotein complexes that may regulate delivery and recycling of proteins to the correct membrane domains. The tripartite complex composed of LIN7 (LIN7A, LIN7B or LIN7C), CASK and APBA1 associates with the motor protein KIF17 to transport vesicles containing N-methyl-D-aspartate (NMDA) receptor subunit NR2B along microtubules. This complex may have the potential to couple synaptic vesicle exocytosis to cell adhesion in brain. Ensures the proper localization of GRIN2B (subunit 2B of the NMDA receptor) to neuronal postsynaptic density and may function in localizing synaptic vesicles at synapses where it is recruited by beta-catenin and cadherin. Required to localize Kir2 channels, GABA transporter (SLC6A12) and EGFR/ERBB1, ERBB2, ERBB3 and ERBB4 to the basolateral membrane of epithelial cells. May increase the amplitude of ASIC3 acid-evoked currents by stabilizing the channel at the cell surface. This Homo sapiens (Human) protein is Protein lin-7 homolog B (LIN7B).